A 98-amino-acid polypeptide reads, in one-letter code: NADH-ubiquinone oxidoreductase chain 4L (98 aa).

The next 3 membrane-spanning stretches (helical) occupy residues 1–21 (MSMV…GLLM), 29–49 (SLLC…ITIM), and 61–81 (IILL…LVMI).

This sequence belongs to the complex I subunit 4L family. In terms of assembly, core subunit of respiratory chain NADH dehydrogenase (Complex I) which is composed of 45 different subunits.

Its subcellular location is the mitochondrion inner membrane. The catalysed reaction is a ubiquinone + NADH + 5 H(+)(in) = a ubiquinol + NAD(+) + 4 H(+)(out). Core subunit of the mitochondrial membrane respiratory chain NADH dehydrogenase (Complex I) which catalyzes electron transfer from NADH through the respiratory chain, using ubiquinone as an electron acceptor. Part of the enzyme membrane arm which is embedded in the lipid bilayer and involved in proton translocation. The polypeptide is NADH-ubiquinone oxidoreductase chain 4L (MT-ND4L) (Procyon lotor (Raccoon)).